The primary structure comprises 360 residues: Peptide chain release factor 1 (360 aa).

Q235 carries the N5-methylglutamine modification.

The protein belongs to the prokaryotic/mitochondrial release factor family. Methylated by PrmC. Methylation increases the termination efficiency of RF1.

Its subcellular location is the cytoplasm. Peptide chain release factor 1 directs the termination of translation in response to the peptide chain termination codons UAG and UAA. This Cupriavidus taiwanensis (strain DSM 17343 / BCRC 17206 / CCUG 44338 / CIP 107171 / LMG 19424 / R1) (Ralstonia taiwanensis (strain LMG 19424)) protein is Peptide chain release factor 1.